The following is a 1040-amino-acid chain: Multidrug resistance protein MdtB (1040 aa).

Transmembrane regions (helical) follow at residues 25–45, 342–362, 369–389, 396–416, 440–460, 472–492, 537–557, 863–883, 888–908, 911–931, 967–987, and 998–1018; these read LLMVAILLAGIIGYRFLPVAA, DTQFELMLAIALVVMIIYLFL, IIPGVAVPLSLIGTFAVMVFL, LTLMALTIATGFVVDDAIVVI, IGFTIISLTFSLIAVLIPLLF, FAVTLAVAILISAVVSLTLTP, WLTLSVALGTLLLSIMLWVFI, LGSTVWLIVAAVVAMYIVLGV, FIHPITILSTLPTAGVGALLA, IAGSELDVIAIIGIILLIGIV, PILMTTLAALLGALPLMLSTG, and IGMVGGLLVSQVLTLFTTPVI.

Belongs to the resistance-nodulation-cell division (RND) (TC 2.A.6) family. MdtB subfamily. As to quaternary structure, part of a tripartite efflux system composed of MdtA, MdtB and MdtC. MdtB forms a heteromultimer with MdtC.

The protein resides in the cell inner membrane. The chain is Multidrug resistance protein MdtB from Citrobacter koseri (strain ATCC BAA-895 / CDC 4225-83 / SGSC4696).